We begin with the raw amino-acid sequence, 350 residues long: Methionine import ATP-binding protein MetN (350 aa).

The ABC transporter domain occupies 2-242; that stretch reads IELKGISQHF…PRHDVTRALI (241 aa). 39 to 46 contacts ATP; that stretch reads GRSGAGKS.

Belongs to the ABC transporter superfamily. Methionine importer (TC 3.A.1.24) family. The complex is composed of two ATP-binding proteins (MetN), two transmembrane proteins (MetI) and a solute-binding protein (MetQ).

Its subcellular location is the cell inner membrane. The catalysed reaction is L-methionine(out) + ATP + H2O = L-methionine(in) + ADP + phosphate + H(+). The enzyme catalyses D-methionine(out) + ATP + H2O = D-methionine(in) + ADP + phosphate + H(+). Its function is as follows. Part of the ABC transporter complex MetNIQ involved in methionine import. Responsible for energy coupling to the transport system. In Ralstonia nicotianae (strain ATCC BAA-1114 / GMI1000) (Ralstonia solanacearum), this protein is Methionine import ATP-binding protein MetN.